The sequence spans 524 residues: Adhesion G-protein coupled receptor G5 (524 aa).

The N-terminal stretch at 1–23 (MDPHGALFFYLCLLAAQVVLVET) is a signal peptide. At 24–246 (LSDLLVLMKR…PAELQVPLEY (223 aa)) the chain is on the extracellular side. N-linked (GlcNAc...) asparagine glycosylation is found at Asn-58, Asn-65, Asn-96, Asn-143, Asn-169, and Asn-175. Residues 74-235 (QSLVFKLSCD…AVLMQLSGDP (162 aa)) enclose the GAIN-B domain. 2 disulfide bridges follow: Cys-185–Cys-217 and Cys-205–Cys-219. Positions 185–235 (CVFWKEGASKSSWGAWSPEGCYTEQPSATQVLCHCNHLTYFAVLMQLSGDP) are GPS. Positions 224-232 (YFAVLMQLS) are stachel. Residues 247–267 (ISFVGCSISIVASLLTILLYA) traverse the membrane as a helical segment. Residues 268–284 (QSRKQSDSTTRIHMNLN) are Cytoplasmic-facing. A helical transmembrane segment spans residues 285-305 (GSVLLLNVTFLLSSQMTLPTM). Over 306–319 (PRPVCKVLAAVLHY) the chain is Extracellular. Cys-310 and Cys-400 are oxidised to a cystine. A helical transmembrane segment spans residues 320–340 (ALLSSLTWMAIEGFNLYLFLG). At 341–351 (RVYNAYIRRYL) the chain is on the cytoplasmic side. The helical transmembrane segment at 352 to 372 (LKLCMLGWGFPALLVLLLLMI) threads the bilayer. The Extracellular segment spans residues 373 to 413 (KSSVYGPCVTSLSKSQENGTGFQNVSMCWIRSPMVHSILVM). 2 N-linked (GlcNAc...) asparagine glycosylation sites follow: Asn-390 and Asn-396. The chain crosses the membrane as a helical span at residues 414-434 (GYGGFTSLFNLVVLAWALWIL). The Cytoplasmic segment spans residues 435–453 (CRLRAREKALSPWAYRDTA). A helical transmembrane segment spans residues 454–476 (MVLGLTVLLGTTWTLAFFSFGVF). Topologically, residues 477–480 (LLPQ) are extracellular. A helical membrane pass occupies residues 481-500 (LFLFTIFNSLYGFFLFLWFC). At 501 to 524 (SQKRYSDAEAKAEMEAVSSSQMTH) the chain is on the cytoplasmic side.

Belongs to the G-protein coupled receptor 2 family. Adhesion G-protein coupled receptor (ADGR) subfamily. In terms of assembly, heterodimer of 2 chains generated by proteolytic processing; the large extracellular N-terminal fragment and the membrane-bound C-terminal fragment predominantly remain associated and non-covalently linked. In terms of processing, autoproteolytically processed at the GPS region of the GAIN-B domain; this cleavage modulates receptor activity. As to expression, expressed at least in kidney, heart, brain and spleen. In terms of tissue distribution, isoform 1 is predominant in spleen. In the kidney, both isoform 1 and isoform 2 are expressed at similar levels. Isoform 2 is the major form in heart and brain. In the kidney, both isoform 1 and isoform 2 are expressed at similar levels.

It is found in the cell membrane. With respect to regulation, forms a heterodimer of 2 chains generated by proteolytic processing that remain associated through non-covalent interactions mediated by the GAIN-B domain. In the inactivated receptor, the Stachel sequence (also named stalk) is embedded in the GAIN-B domain, where it adopts a beta-strand conformation. On activation, the Stachel moves into the 7 transmembrane region and adopts a twisted hook-shaped configuration that forms contacts within the receptor, leading to coupling of a G-alpha protein, which activates signaling. The cleaved GAIN-B and N-terminal domains can then dissociate from the rest of the receptor. Functionally, orphan adhesion G-protein coupled receptor (aGPCR). Ligand binding causes a conformation change that triggers signaling via guanine nucleotide-binding proteins (G proteins) and modulates the activity of downstream effectors, such as adenylate cyclase. ADGRG5 is specifically coupled to G(s) G proteins and mediates activation of adenylate cyclase activity. Its function is as follows. Isoform 1, but not isoform 2, is constitutively active, as evidenced by elevated basal cAMP levels, and responds to mechanical activation (shaking). This Mus musculus (Mouse) protein is Adhesion G-protein coupled receptor G5.